Here is a 198-residue protein sequence, read N- to C-terminus: MRKSKRERQRLLQETIRENPFITDEELAEKFSVSVQTIRLDRLELSIPELRERIKNVARQSFADKVRALPLEEVIGDIIDIEPDASAISIFDVKEEHVFRRTRIARGHHLFAQANSLAVAVIHDELALTAKATIRFVRQVKEGERVVAKAKVTGKTAHGRTIVEVNSYVGQELVFSGTFEMYRSNIEKKDGDSNEYRG.

A MaoC-like domain is found at 102 to 167; it reads TRIARGHHLF…HGRTIVEVNS (66 aa).

It belongs to the FapR family.

Its function is as follows. Transcriptional factor involved in regulation of membrane lipid biosynthesis by repressing genes involved in fatty acid and phospholipid metabolism. This chain is Transcription factor FapR, found in Geobacillus kaustophilus (strain HTA426).